Reading from the N-terminus, the 543-residue chain is Chaperonin GroEL (543 aa).

ATP-binding positions include 29 to 32 (TLGP), 86 to 90 (DGTTT), glycine 413, 478 to 480 (NAA), and aspartate 494.

This sequence belongs to the chaperonin (HSP60) family. As to quaternary structure, forms a cylinder of 14 subunits composed of two heptameric rings stacked back-to-back. Interacts with the co-chaperonin GroES.

The protein localises to the cytoplasm. It catalyses the reaction ATP + H2O + a folded polypeptide = ADP + phosphate + an unfolded polypeptide.. Its function is as follows. Together with its co-chaperonin GroES, plays an essential role in assisting protein folding. The GroEL-GroES system forms a nano-cage that allows encapsulation of the non-native substrate proteins and provides a physical environment optimized to promote and accelerate protein folding. This Lactobacillus johnsonii (strain CNCM I-12250 / La1 / NCC 533) protein is Chaperonin GroEL.